Reading from the N-terminus, the 1084-residue chain is Teashirt homolog 1 (1084 aa).

Disordered regions lie at residues 49–108 (EETE…SVSY), 140–167 (NSAT…TAST), and 269–298 (GHYR…MEME). 2 stretches are compositionally biased toward polar residues: residues 57 to 71 (QSYQ…TNQD) and 140 to 152 (NSAT…SQKE). 2 C2H2-type zinc fingers span residues 246–270 (FRCK…ETGH) and 307–331 (LKCM…KTKH). A compositionally biased stretch (basic and acidic residues) spans 269-284 (GHYRDDNRDKDSEKTK). A C2H2-type 3; atypical zinc finger spans residues 416–440 (LKCMECGSSHDTLQQLTAHMMVTGH). Disordered stretches follow at residues 467–534 (SIPL…EKFE) and 653–728 (TGKV…LKAK). 3 stretches are compositionally biased toward basic and acidic residues: residues 496–534 (SEEK…EKFE), 653–671 (TGKV…EKSS), and 681–714 (KENK…ESTL). Phosphoserine is present on S771. Positions 855–879 (GRLTPKSSTPSTVSEKSDADGSSFE) are disordered. Over residues 859-868 (PKSSTPSTVS) the composition is skewed to polar residues. Positions 891–961 (RKGRQSNWNP…NVKYQLRRTG (71 aa)) form a DNA-binding region, homeobox; atypical. C2H2-type zinc fingers lie at residues 976–998 (FFCN…LETH) and 1044–1067 (FQCK…SKTH).

The protein belongs to the teashirt C2H2-type zinc-finger protein family. As to quaternary structure, interacts (via homeobox domain) with APBB1 (via PID domain 1).

It localises to the nucleus. Functionally, probable transcriptional regulator involved in developmental processes. May act as a transcriptional repressor (Potential). This is Teashirt homolog 1 (Tshz1) from Mus musculus (Mouse).